The sequence spans 206 residues: Holliday junction branch migration complex subunit RuvA (206 aa).

The domain I stretch occupies residues 1–63 (MISSLRGDVI…DDAHTLYAFS (63 aa)). The segment at 64–142 (TSEQRETFGI…ALEATSGQAT (79 aa)) is domain II. The segment at 143-150 (IGDIAATG) is flexible linker. The segment at 151 to 206 (NDTALQSQVVEALVGLGFTEAKAATAVKKILEEQNGTTDPSSVLREALQRLSGQKR) is domain III.

This sequence belongs to the RuvA family. In terms of assembly, homotetramer. Forms an RuvA(8)-RuvB(12)-Holliday junction (HJ) complex. HJ DNA is sandwiched between 2 RuvA tetramers; dsDNA enters through RuvA and exits via RuvB. An RuvB hexamer assembles on each DNA strand where it exits the tetramer. Each RuvB hexamer is contacted by two RuvA subunits (via domain III) on 2 adjacent RuvB subunits; this complex drives branch migration. In the full resolvosome a probable DNA-RuvA(4)-RuvB(12)-RuvC(2) complex forms which resolves the HJ.

It localises to the cytoplasm. Functionally, the RuvA-RuvB-RuvC complex processes Holliday junction (HJ) DNA during genetic recombination and DNA repair, while the RuvA-RuvB complex plays an important role in the rescue of blocked DNA replication forks via replication fork reversal (RFR). RuvA specifically binds to HJ cruciform DNA, conferring on it an open structure. The RuvB hexamer acts as an ATP-dependent pump, pulling dsDNA into and through the RuvAB complex. HJ branch migration allows RuvC to scan DNA until it finds its consensus sequence, where it cleaves and resolves the cruciform DNA. The polypeptide is Holliday junction branch migration complex subunit RuvA (Corynebacterium urealyticum (strain ATCC 43042 / DSM 7109)).